The following is a 791-amino-acid chain: Lon protease (791 aa).

In terms of domain architecture, Lon N-terminal spans 3 to 209 (KPILISRAIV…TILHLLFDQL (207 aa)). Residue 365-372 (GPPGVGKT) participates in ATP binding. One can recognise a Lon proteolytic domain in the interval 605-790 (TTIPGIVNGM…DEVYNIVFGE (186 aa)). Active-site residues include S696 and K739.

This sequence belongs to the peptidase S16 family. As to quaternary structure, homohexamer. Organized in a ring with a central cavity.

Its subcellular location is the cytoplasm. It catalyses the reaction Hydrolysis of proteins in presence of ATP.. Functionally, ATP-dependent serine protease that mediates the selective degradation of mutant and abnormal proteins as well as certain short-lived regulatory proteins. Required for cellular homeostasis and for survival from DNA damage and developmental changes induced by stress. Degrades polypeptides processively to yield small peptide fragments that are 5 to 10 amino acids long. Binds to DNA in a double-stranded, site-specific manner. The protein is Lon protease of Ureaplasma parvum serovar 3 (strain ATCC 27815 / 27 / NCTC 11736).